The primary structure comprises 168 residues: Cofilin-1-B (168 aa).

Position 2 is an N-acetylalanine (alanine 2). Residues 4 to 153 (GVMVSDDVVK…NDPCNLADKL (150 aa)) form the ADF-H domain. The Nuclear localization signal signature appears at 30–34 (KKRKK).

This sequence belongs to the actin-binding proteins ADF family. Post-translationally, inactive when phosphorylated. Phosphorylation levels vary during development. Oocytes contain only the phosphorylated form, and 80-95% of cfl1 protein is phosphorylated in unfertilized eggs. Rapid dephosphorylation occurs within 30 minutes after fertilization. Phosphorylation levels increase again between the morula and blastula stages (5-8 hpf) and then decrease again as gastrulation approaches. Dephosphorylated by pdxp. Expressed diffusely in both animal and vegetal hemispheres of the oocyte. During cleavage, expression accumulates around the cleavage furrow, along the vegetal membrane, and later in the midbody. Strongly expressed in the animal hemisphere during blastula stages, with most cells showing expression by gastrulation. By stage 17, expression is highest in cells of the developing neuroectoderm, and at stage 24 the notochord, neural tube, neural crest, somites and some cells of the archenteron show high expression. By stage 35, expression has declined in the notochord, but remains in the neural tube, epidermis and a layer of cells in the archenteron. Also highly expressed in the retina and neuronal cell bodies at the base of the cement gland but not the cement gland itself. At stage 38, expression is widespread, being highest in the nervous system and retina. In the adult, expression is high in the brain, heart, oocyte, stomach, and low in skeletal muscle.

It localises to the nucleus matrix. The protein localises to the cytoplasm. Its subcellular location is the cytoskeleton. The protein resides in the cell cortex. It is found in the membrane. Its function is as follows. May play a role in the regulation of cell morphology and cytoskeletal organization. Binds to F-actin and exhibits pH-sensitive F-actin depolymerizing activity. Required for formation of the cleavage furrow during cytokinesis. This is Cofilin-1-B (cfl1-b) from Xenopus laevis (African clawed frog).